The following is a 1418-amino-acid chain: MISPTHQSQYLNYFVNPVLMTESGDIIDSVTGTTTTTANMSNTTIDAPTPASTTKNYKHKKQNTNTGTSMSPSNSINSTNNNAAAAAATTTTSKKSKDIPLELTAFGTTPSGKPRLFVCQVCTRAFARLEHLRRHERSHTKEKPFSCGVCQRKFSRRDLLLRHAQKLHAGCTDAITRLRRKSIKKSQDGDDDDDDDDDDEEMANSEDENDHDESGNASTKNGKKDKKDPPPEFNLNLFNSKQKPTKANTTKSKVAKLSTTTSRKNSTNPTRKNSSSLHKQVLDQRQKAAVNTKIVSSTKIVSGTNSGVSITPTRSRRGASFSAQSGANYAINIPEFNDIYPQSDNVEFSTPQFLPSSLDNEMTWLNNIPNIPGLSDSVSAANLMRQNSITNSADHVTPPVNVSQHGSFSHQSTFSATDMGQTRSESVNSLNTPFDGSYMMPTVTISNQEIQNGVAAHHHHQQQQQHQQHNHQHQPNQSSLGLSRNDMLSEDHYGYSFYDIPENILNFPMDSISTTSNAMSSGPIQNFKPLSPITQEIEHEITPRIDGRIGDFQNNNNTNDNPIHQNINYDLNFLHTIDDIGQDVISKFMPGGYSFYGDNNVSATSSANDYNSPNNIVSPSQQNNQFALHNQSSHPSGASPHLNQAMMNKMRLHNYSSNKLFTNHIRHMINKALGKYPISGIMTPTIPSNEKLEFYLSVFIQSFLAHLPFIHPSKLNEYEIMAMTGNEDINNESARVCLPLLTATMGALLANNKNDAEHLYEASRRTIHIYLESRKTNSTNDKNYKNGKDKSSSGNPLWLLQSLMLSVLYGLFSDNENNVYIVIRQLNALNSLVKTSIKNKGPIFFSNNGEDEELYNKLNSHDNGTSLFSNNLNDEMRYKNNINMQSQTRIVFIIYRLTNFLLMMYNVPLTFSINDINQLAVTSKDEETLWNFKNYQEFQEFSHKNNKTLDDYLNHKNEPIIFRELLLTVIKFGISDSNISPEIEKKVTHQLQNLCKYGFNCLVHGIYEIKQYQEMKEVDTFKVLDYLTKFYPTNDGLGFNCFRLPANKDLEKIDYALLVDFTKISSIIDLKLLKEQSWLKNYQDLTQNYHRLLDAHSTGNPLNSINDYDYLKLADCCISVLKLILFKVEDSNSNSRNRSKNDPTNEINNKLNNNNNNNNDMNNNNSNGDQLISAFDTDFGYLNMDNNGYAKKEEFSRFTDDELRYDKENTMSYFDKHIKLDIFEEVEKSSNLIQAQMLFHAFSVLSIFSVYVMRKNDNNSSPFANTDLIFELNHRYSMVLRLLERLETFLKLRYQTSAGGGGGGVNNNNNNALSIKLEQEFTNLYLYNGNVLSSDHNTNTNTTNTITTTTTTDNGTKQNQHHSQDFGLEKTLYILKMGENVLNYIYDLNLKVCVFKKLGDSLSEIRKYLIDNESTLNG.

Low complexity-rich tracts occupy residues 34–44 (TTTTANMSNTT) and 68–93 (TSMSPSNSINSTNNNAAAAAATTTTS). A disordered region spans residues 34–96 (TTTTANMSNT…AATTTTSKKS (63 aa)). 2 consecutive C2H2-type zinc fingers follow at residues 117 to 139 (FVCQVCTRAFARLEHLRRHERSH) and 145 to 168 (FSCGVCQRKFSRRDLLLRHAQKLH). Disordered regions lie at residues 181-285 (KSIK…LDQR), 403-426 (SQHGSFSHQSTFSATDMGQTRSES), 454-484 (VAAHHHHQQQQQHQQHNHQHQPNQSSLGLSR), 1132-1167 (NSNSRNRSKNDPTNEINNKLNNNNNNNNDMNNNNSN), and 1338-1362 (TNTNTTNTITTTTTTDNGTKQNQHH). The span at 189–211 (GDDDDDDDDDDEEMANSEDENDH) shows a compositional bias: acidic residues. Residues 236–278 (NLFNSKQKPTKANTTKSKVAKLSTTTSRKNSTNPTRKNSSSLH) are compositionally biased toward polar residues. 3 stretches are compositionally biased toward low complexity: residues 462–477 (QQQQHQQHNHQHQPNQ), 1145–1167 (NEINNKLNNNNNNNNDMNNNNSN), and 1338–1356 (TNTNTTNTITTTTTTDNGT).

The protein resides in the nucleus. Transcription factor involved in the regulation of hyphal growth. This is Transcriptional regulator ADR1 (ADR1) from Candida albicans (strain SC5314 / ATCC MYA-2876) (Yeast).